A 191-amino-acid chain; its full sequence is MYNVIFVLGGPGAGKGTQCDRLAEKFDKFVHISAGDCLREEQNRPGSKYGNLIKEYIKDGKIVPMEITISLLETKMKECHDKGIDKFLIDGFPREMDQCEGFEKSVCPAKFALYFRCGQETMLKRLIHRGKTSGRSDDNIESIKKRFVTYTKASMPVVEYLKSQNRLITIDAEQDPDAVFEDTVKALQPYL.

12 to 17 (GAGKGT) contacts ATP. Residues 33–63 (SAGDCLREEQNRPGSKYGNLIKEYIKDGKIV) are NMP. A ribonucleoside 5'-phosphate contacts are provided by residues Arg39, 61 to 63 (KIV), 91 to 94 (GFPR), and Gln98. The interval 128–138 (HRGKTSGRSDD) is LID. Arg129 lines the ATP pocket. The a ribonucleoside 5'-phosphate site is built by Arg135 and Arg146. An ATP-binding site is contributed by Gln174.

Belongs to the adenylate kinase family. UMP-CMP kinase subfamily. Monomer. Requires Mg(2+) as cofactor.

The protein localises to the cytoplasm. The protein resides in the nucleus. It catalyses the reaction UMP + ATP = UDP + ADP. Functionally, catalyzes the phosphorylation of pyrimidine nucleoside monophosphates at the expense of ATP. Plays an important role in de novo pyrimidine nucleotide biosynthesis. Has preference for UMP and dUMP as phosphate acceptors, but can also use CMP, dCMP and AMP. The sequence is that of Uridylate kinase from Schizosaccharomyces pombe (strain 972 / ATCC 24843) (Fission yeast).